Here is a 294-residue protein sequence, read N- to C-terminus: F-box protein SKIP3 (294 aa).

An F-box domain is found at 21–67; the sequence is SSTLDSLPEGCISNIISFTSPEDACVAAAVSKIFESAVKSDIVWEKF.

In terms of assembly, part of a SCF (SKP1-cullin-F-box) protein ligase complex. Interacts with SKP1A/ASK1.

The protein operates within protein modification; protein ubiquitination. This Arabidopsis thaliana (Mouse-ear cress) protein is F-box protein SKIP3 (SKIP3).